The following is a 78-amino-acid chain: Large ribosomal subunit protein bL28 (78 aa).

The tract at residues 1–23 (MSRVCQVTGKRPMVGNNRSHAKN) is disordered.

The protein belongs to the bacterial ribosomal protein bL28 family.

The chain is Large ribosomal subunit protein bL28 from Shewanella pealeana (strain ATCC 700345 / ANG-SQ1).